The sequence spans 123 residues: Phosphoribosyl-AMP cyclohydrolase (123 aa).

Asp73 provides a ligand contact to Mg(2+). Cys74 serves as a coordination point for Zn(2+). Asp75 and Asp77 together coordinate Mg(2+). Residues Cys90 and Cys97 each contribute to the Zn(2+) site.

Belongs to the PRA-CH family. Homodimer. The cofactor is Mg(2+). Requires Zn(2+) as cofactor.

The protein localises to the cytoplasm. The catalysed reaction is 1-(5-phospho-beta-D-ribosyl)-5'-AMP + H2O = 1-(5-phospho-beta-D-ribosyl)-5-[(5-phospho-beta-D-ribosylamino)methylideneamino]imidazole-4-carboxamide. It participates in amino-acid biosynthesis; L-histidine biosynthesis; L-histidine from 5-phospho-alpha-D-ribose 1-diphosphate: step 3/9. Its function is as follows. Catalyzes the hydrolysis of the adenine ring of phosphoribosyl-AMP. In Methanoregula boonei (strain DSM 21154 / JCM 14090 / 6A8), this protein is Phosphoribosyl-AMP cyclohydrolase.